Reading from the N-terminus, the 443-residue chain is Thymidine phosphorylase (443 aa).

This sequence belongs to the thymidine/pyrimidine-nucleoside phosphorylase family. As to quaternary structure, homodimer.

It carries out the reaction thymidine + phosphate = 2-deoxy-alpha-D-ribose 1-phosphate + thymine. It participates in pyrimidine metabolism; dTMP biosynthesis via salvage pathway; dTMP from thymine: step 1/2. The enzymes which catalyze the reversible phosphorolysis of pyrimidine nucleosides are involved in the degradation of these compounds and in their utilization as carbon and energy sources, or in the rescue of pyrimidine bases for nucleotide synthesis. The protein is Thymidine phosphorylase of Shewanella sp. (strain MR-7).